Consider the following 104-residue polypeptide: Thioredoxin (104 aa).

Residues 2–104 form the Thioredoxin domain; the sequence is AIVKVTDSNF…NLAEVIEKHL (103 aa). Residues Cys-29 and Cys-32 are joined by a disulfide bond.

It belongs to the thioredoxin family.

Component of the thioredoxin-thioredoxin reductase system. Participates in various redox reactions through the reversible oxidation of its active center dithiol to a disulfide and catalyzes dithiol-disulfide exchange reactions. The protein is Thioredoxin (trxA) of Staphylococcus saprophyticus subsp. saprophyticus (strain ATCC 15305 / DSM 20229 / NCIMB 8711 / NCTC 7292 / S-41).